Consider the following 135-residue polypeptide: Small ribosomal subunit protein uS11 (135 aa).

A disordered region spans residues 1–20 (MGRQRQQRSRGSRSRRRVRK).

Belongs to the universal ribosomal protein uS11 family. Part of the 30S ribosomal subunit. Interacts with proteins S7 and S18. Binds to IF-3.

Functionally, located on the platform of the 30S subunit, it bridges several disparate RNA helices of the 16S rRNA. Forms part of the Shine-Dalgarno cleft in the 70S ribosome. The sequence is that of Small ribosomal subunit protein uS11 from Rubrobacter xylanophilus (strain DSM 9941 / JCM 11954 / NBRC 16129 / PRD-1).